The primary structure comprises 196 residues: GTP cyclohydrolase 1 (196 aa).

Residues cysteine 85, histidine 88, and cysteine 158 each coordinate Zn(2+).

The protein belongs to the GTP cyclohydrolase I family. Homomer.

It carries out the reaction GTP + H2O = 7,8-dihydroneopterin 3'-triphosphate + formate + H(+). It functions in the pathway cofactor biosynthesis; 7,8-dihydroneopterin triphosphate biosynthesis; 7,8-dihydroneopterin triphosphate from GTP: step 1/1. This is GTP cyclohydrolase 1 from Corynebacterium aurimucosum (strain ATCC 700975 / DSM 44827 / CIP 107346 / CN-1) (Corynebacterium nigricans).